A 300-amino-acid polypeptide reads, in one-letter code: Acyl-CoA-binding domain-containing protein 6 (300 aa).

Positions 1–19 are enriched in low complexity; the sequence is MASRSPSSSPDSATGSGTD. The segment at 1–43 is disordered; the sequence is MASRSPSSSPDSATGSGTDPARPDTGEPLGGGSDSDSDFGLGK. The 86-residue stretch at 60 to 145 folds into the ACB domain; it reads LENEFESAAD…VHALDPEGSQ (86 aa). Residues 87–91, lysine 113, and tyrosine 132 each bind an acyl-CoA; that span reads YARFK. The segment at 142-162 is disordered; the sequence is EGSQKSSERRGGEKRTGFGGP. Residues 147–157 are compositionally biased toward basic and acidic residues; it reads SSERRGGEKRT. ANK repeat units follow at residues 209–238 and 242–271; these read EGRALLHWACDRGHKDLVSLLLQNNADINS and EGQTALHYASACEFAEIVELLLKAGADPSI. A disordered region spans residues 270 to 300; the sequence is SIKDQEGSLPEEVTESSAISSLLRQYTAPKG. The span at 284-293 shows a compositional bias: polar residues; that stretch reads ESSAISSLLR.

Higly expressed in the central nervous system, developing eyes, otic vesicle, and trunk muscles.

The protein localises to the cytoplasm. It is found in the nucleus. Binds long-chain acyl-coenzyme A molecules with a strong preference for unsaturated C18:1-CoA. Does not bind fatty acids. Plays a role in protein N-myristoylation. The protein is Acyl-CoA-binding domain-containing protein 6 (acbd6) of Danio rerio (Zebrafish).